The sequence spans 456 residues: RuvB-like helicase 1 (456 aa).

Residue 71 to 78 (GGAGTGKT) participates in ATP binding.

It belongs to the RuvB family. May form heterododecamers with RVB2. Component of the SWR1 chromatin remodeling complex, the INO80 chromatin remodeling complex, and of the R2TP complex.

Its subcellular location is the nucleus. The catalysed reaction is ATP + H2O = ADP + phosphate + H(+). Its function is as follows. DNA helicase which participates in several chromatin remodeling complexes, including the SWR1 and the INO80 complexes. The SWR1 complex mediates the ATP-dependent exchange of histone H2A for the H2A variant HZT1 leading to transcriptional regulation of selected genes by chromatin remodeling. The INO80 complex remodels chromatin by shifting nucleosomes and is involved in DNA repair. Also involved in pre-rRNA processing. The sequence is that of RuvB-like helicase 1 (rvb1) from Schizosaccharomyces pombe (strain 972 / ATCC 24843) (Fission yeast).